Reading from the N-terminus, the 255-residue chain is Imidazole glycerol phosphate synthase subunit HisF (255 aa).

Active-site residues include aspartate 13 and aspartate 132.

Belongs to the HisA/HisF family. As to quaternary structure, heterodimer of HisH and HisF.

It localises to the cytoplasm. It catalyses the reaction 5-[(5-phospho-1-deoxy-D-ribulos-1-ylimino)methylamino]-1-(5-phospho-beta-D-ribosyl)imidazole-4-carboxamide + L-glutamine = D-erythro-1-(imidazol-4-yl)glycerol 3-phosphate + 5-amino-1-(5-phospho-beta-D-ribosyl)imidazole-4-carboxamide + L-glutamate + H(+). It functions in the pathway amino-acid biosynthesis; L-histidine biosynthesis; L-histidine from 5-phospho-alpha-D-ribose 1-diphosphate: step 5/9. IGPS catalyzes the conversion of PRFAR and glutamine to IGP, AICAR and glutamate. The HisF subunit catalyzes the cyclization activity that produces IGP and AICAR from PRFAR using the ammonia provided by the HisH subunit. The protein is Imidazole glycerol phosphate synthase subunit HisF of Leptospira biflexa serovar Patoc (strain Patoc 1 / ATCC 23582 / Paris).